Reading from the N-terminus, the 1553-residue chain is Pre-mRNA cleavage complex 2 protein Pcf11 (1553 aa).

Residue Ser-2 is modified to N-acetylserine. In terms of domain architecture, CID spans 14 to 142 (AREDACRDYQ…ALDVRVNSLD (129 aa)). Ser-120 is modified (phosphoserine). At Thr-121 the chain carries Phosphothreonine. The tract at residues 167–186 (NKSPDEPSTPGTVVSSPSIS) is disordered. Ser-169 and Ser-182 each carry phosphoserine. Residues 174–186 (STPGTVVSSPSIS) are compositionally biased toward low complexity. A coiled-coil region spans residues 208–235 (LLAKQKQLLELQQKKLELELEQAKAQLA). The interval 265-648 (AVKTPHQVPV…KQQHRLSVDA (384 aa)) is disordered. Residue Lys-291 forms a Glycyl lysine isopeptide (Lys-Gly) (interchain with G-Cter in SUMO2) linkage. Residues 308 to 318 (HGKEQSHRKEF) show a composition bias toward basic and acidic residues. The segment covering 321 to 342 (NTINQSDIKTSKNVPSEKLNSS) has biased composition (polar residues). A Glycyl lysine isopeptide (Lys-Gly) (interchain with G-Cter in SUMO2) cross-link involves residue Lys-329. Basic and acidic residues-rich tracts occupy residues 343–365 (KQEK…DSKS), 381–422 (HTKD…DVKE), and 428–443 (EKKE…EHRV). Residue Lys-457 forms a Glycyl lysine isopeptide (Lys-Gly) (interchain with G-Cter in SUMO2) linkage. Residues 476–487 (STRKRSRSRSPK) are compositionally biased toward basic residues. Ser-490, Ser-495, Ser-510, and Ser-512 each carry phosphoserine. The span at 495–509 (SPKRRDRRSPKRRQR) shows a compositional bias: basic residues. Composition is skewed to basic and acidic residues over residues 530–568 (SHME…DRPQ) and 600–616 (SGWE…EHSK). Ser-645 carries the phosphoserine modification. A Glycyl lysine isopeptide (Lys-Gly) (interchain with G-Cter in SUMO2) cross-link involves residue Lys-654. At Ser-705 the chain carries Phosphoserine. The interval 707–733 (FNDRFPLKRPRYEDSDKPFVDGPASRF) is disordered. A compositionally biased stretch (basic and acidic residues) spans 716 to 725 (PRYEDSDKPF). A Glycyl lysine isopeptide (Lys-Gly) (interchain with G-Cter in SUMO2) cross-link involves residue Lys-723. The residue at position 777 (Ser-777) is a Phosphoserine. Position 785 is a phosphothreonine (Thr-785). Ser-794 carries the post-translational modification Phosphoserine. Asymmetric dimethylarginine is present on residues Arg-805, Arg-820, and Arg-833. At Ser-851 the chain carries Phosphoserine. The interval 921–940 (HGPSGAAIRFDGPHGQPGGG) is disordered. Residues Arg-929, Arg-944, Arg-957, Arg-982, Arg-995, Arg-1008, Arg-1092, and Arg-1103 each carry the asymmetric dimethylarginine modification. A Glycyl lysine isopeptide (Lys-Gly) (interchain with G-Cter in SUMO2) cross-link involves residue Lys-1276. Positions 1286–1313 (DSATAQVTEAVAQPPPEEDEDQNEDQDV) are disordered. Acidic residues predominate over residues 1301-1313 (PEEDEDQNEDQDV). Residues Lys-1417, Lys-1509, Lys-1522, and Lys-1544 each participate in a glycyl lysine isopeptide (Lys-Gly) (interchain with G-Cter in SUMO2) cross-link. The disordered stretch occupies residues 1516–1553 (CESPKVKEEQIDAPPACSEESVATPTEIKTESDTVESV).

As to quaternary structure, associates with the phosphorylated CTD domain of POLR2A /RNA polymerase II. Phosphorylation at Ser-120 and/or Thr-121 by WNK1 weakens its association with POLR2A/RNA polymerase II, promoting transcript release from the chromatin template and mRNA export to the cytoplasm.

The protein localises to the nucleus. In terms of biological role, component of pre-mRNA cleavage complex II, which promotes transcription termination by RNA polymerase II. The polypeptide is Pre-mRNA cleavage complex 2 protein Pcf11 (Mus musculus (Mouse)).